The chain runs to 662 residues: UvrABC system protein B (662 aa).

One can recognise a Helicase ATP-binding domain in the interval 25-182 (KGIEKREKFQ…KKLVEIQYER (158 aa)). Position 38-45 (38-45 (GVTGSGKT)) interacts with ATP. Positions 91-114 (YYDYYQPEAYVAQSDTYIEKDASI) match the Beta-hairpin motif. One can recognise a Helicase C-terminal domain in the interval 429-595 (QIDDLYTSIQ…TIIKDIREVI (167 aa)). The 36-residue stretch at 622–657 (DKLIEKYEEEMKEAAQNLQFEKAAHLRDVIYKLKKD) folds into the UVR domain.

This sequence belongs to the UvrB family. Forms a heterotetramer with UvrA during the search for lesions. Interacts with UvrC in an incision complex.

The protein resides in the cytoplasm. In terms of biological role, the UvrABC repair system catalyzes the recognition and processing of DNA lesions. A damage recognition complex composed of 2 UvrA and 2 UvrB subunits scans DNA for abnormalities. Upon binding of the UvrA(2)B(2) complex to a putative damaged site, the DNA wraps around one UvrB monomer. DNA wrap is dependent on ATP binding by UvrB and probably causes local melting of the DNA helix, facilitating insertion of UvrB beta-hairpin between the DNA strands. Then UvrB probes one DNA strand for the presence of a lesion. If a lesion is found the UvrA subunits dissociate and the UvrB-DNA preincision complex is formed. This complex is subsequently bound by UvrC and the second UvrB is released. If no lesion is found, the DNA wraps around the other UvrB subunit that will check the other stand for damage. This is UvrABC system protein B from Clostridium botulinum (strain Langeland / NCTC 10281 / Type F).